A 405-amino-acid polypeptide reads, in one-letter code: Cystathionine gamma-lyase (405 aa).

Substrate is bound by residues Arg-62, Tyr-114, and Arg-119. Lys-212 bears the N6-(pyridoxal phosphate)lysine mark. Glu-339 is a substrate binding site.

Belongs to the trans-sulfuration enzymes family. In terms of assembly, homotetramer. Interacts with CALM in a calcium-dependent manner. The cofactor is pyridoxal 5'-phosphate. In terms of tissue distribution, highly expressed in liver. Also in muscle and lower expression in most tissues except heart, pituitary gland, spleen, thymus, and vascular tissue, where it is hardly detected.

Its subcellular location is the cytoplasm. The enzyme catalyses L,L-cystathionine + H2O = 2-oxobutanoate + L-cysteine + NH4(+). It carries out the reaction L-cysteine + H2O = hydrogen sulfide + pyruvate + NH4(+) + H(+). It catalyses the reaction L-homocysteine + H2O = 2-oxobutanoate + hydrogen sulfide + NH4(+) + H(+). The catalysed reaction is L-homoserine = 2-oxobutanoate + NH4(+). The enzyme catalyses L-selenocystathionine + H2O = L-selenocysteine + 2-oxobutanoate + NH4(+). It functions in the pathway amino-acid biosynthesis; L-cysteine biosynthesis; L-cysteine from L-homocysteine and L-serine: step 2/2. With respect to regulation, inhibited by propargylglycine, trifluoroalanine and aminoethoxyvinylglycine. In terms of biological role, catalyzes the last step in the trans-sulfuration pathway from L-methionine to L-cysteine in a pyridoxal-5'-phosphate (PLP)-dependent manner, which consists on cleaving the L,L-cystathionine molecule into L-cysteine, ammonia and 2-oxobutanoate. Part of the L-cysteine derived from the trans-sulfuration pathway is utilized for biosynthesis of the ubiquitous antioxidant glutathione. Besides its role in the conversion of L-cystathionine into L-cysteine, it utilizes L-cysteine and L-homocysteine as substrates (at much lower rates than L,L-cystathionine) to produce the endogenous gaseous signaling molecule hydrogen sulfide (H2S). In vitro, it converts two L-cysteine molecules into lanthionine and H2S, also two L-homocysteine molecules to homolanthionine and H2S, which can be particularly relevant under conditions of severe hyperhomocysteinemia (which is a risk factor for cardiovascular disease, diabetes, and Alzheimer's disease). Lanthionine and homolanthionine are structural homologs of L,L-cystathionine that differ by the absence or presence of an extra methylene group, respectively. Acts as a cysteine-protein sulfhydrase by mediating sulfhydration of target proteins: sulfhydration consists of converting -SH groups into -SSH on specific cysteine residues of target proteins such as GAPDH, PTPN1 and NF-kappa-B subunit RELA, thereby regulating their function. By generating the gasotransmitter H2S, it participates in a number of physiological processes such as vasodilation, bone protection, and inflammation. Plays an essential role in myogenesis by contributing to the biogenesis of H2S in skeletal muscle tissue. Can also accept homoserine as substrate. Catalyzes the elimination of selenocystathionine (which can be derived from the diet) to yield selenocysteine, ammonia and 2-oxobutanoate. The protein is Cystathionine gamma-lyase (CTH) of Homo sapiens (Human).